The primary structure comprises 264 residues: Putative hydro-lyase Bpet2233 (264 aa).

This sequence belongs to the D-glutamate cyclase family.

The chain is Putative hydro-lyase Bpet2233 from Bordetella petrii (strain ATCC BAA-461 / DSM 12804 / CCUG 43448).